The chain runs to 487 residues: Glutamyl-tRNA(Gln) amidotransferase subunit A (487 aa).

Catalysis depends on charge relay system residues lysine 79 and serine 154. Catalysis depends on serine 178, which acts as the Acyl-ester intermediate.

The protein belongs to the amidase family. GatA subfamily. As to quaternary structure, heterotrimer of A, B and C subunits.

It carries out the reaction L-glutamyl-tRNA(Gln) + L-glutamine + ATP + H2O = L-glutaminyl-tRNA(Gln) + L-glutamate + ADP + phosphate + H(+). Functionally, allows the formation of correctly charged Gln-tRNA(Gln) through the transamidation of misacylated Glu-tRNA(Gln) in organisms which lack glutaminyl-tRNA synthetase. The reaction takes place in the presence of glutamine and ATP through an activated gamma-phospho-Glu-tRNA(Gln). This chain is Glutamyl-tRNA(Gln) amidotransferase subunit A, found in Moorella thermoacetica (strain ATCC 39073 / JCM 9320).